Here is a 283-residue protein sequence, read N- to C-terminus: 4-diphosphocytidyl-2-C-methyl-D-erythritol kinase (283 aa).

The active site involves Lys-10. 99–109 (PMGGGLGGGSS) is an ATP binding site. Residue Asp-141 is part of the active site.

Belongs to the GHMP kinase family. IspE subfamily. In terms of assembly, homodimer.

It carries out the reaction 4-CDP-2-C-methyl-D-erythritol + ATP = 4-CDP-2-C-methyl-D-erythritol 2-phosphate + ADP + H(+). It participates in isoprenoid biosynthesis; isopentenyl diphosphate biosynthesis via DXP pathway; isopentenyl diphosphate from 1-deoxy-D-xylulose 5-phosphate: step 3/6. Its function is as follows. Catalyzes the phosphorylation of the position 2 hydroxy group of 4-diphosphocytidyl-2C-methyl-D-erythritol. This chain is 4-diphosphocytidyl-2-C-methyl-D-erythritol kinase, found in Escherichia coli O9:H4 (strain HS).